The following is a 201-amino-acid chain: 3-isopropylmalate dehydratase small subunit (201 aa).

Belongs to the LeuD family. LeuD type 1 subfamily. Heterodimer of LeuC and LeuD.

It carries out the reaction (2R,3S)-3-isopropylmalate = (2S)-2-isopropylmalate. The protein operates within amino-acid biosynthesis; L-leucine biosynthesis; L-leucine from 3-methyl-2-oxobutanoate: step 2/4. Catalyzes the isomerization between 2-isopropylmalate and 3-isopropylmalate, via the formation of 2-isopropylmaleate. The chain is 3-isopropylmalate dehydratase small subunit from Buchnera aphidicola subsp. Baizongia pistaciae (strain Bp).